We begin with the raw amino-acid sequence, 385 residues long: HAT1-interacting factor 1 (385 aa).

The segment at 80–199 is important for interaction with heterotetrameric histone H3 and H4 and for interaction with dimeric histone H2A and H2B; sequence GNLFGDALLA…RKSGFHIYFE (120 aa). Composition is skewed to low complexity over residues 85–97 and 105–116; these read DALLAGDDGSGSE and DVSNGEEGNENG. The tract at residues 85 to 163 is disordered; it reads DALLAGDDGS…EEENVEKEEE (79 aa). The span at 129–160 shows a compositional bias: acidic residues; the sequence is DQEEEDLTGDVDSGDSEDSGEGSEEEEENVEK. Position 174 is a phosphoserine (Ser174). TPR repeat units lie at residues 186–220, 229–262, and 289–322; these read VSQLRKSGFHIYFENDLYENALDLLAQALMLLGRP, ENSRLRIGDVYILMGDIEREAEMFSRAIHHYLKA, and ALRWVDQVPAKDKLKRFKHAKALLEKHMTTRPKD. Residues 248 to 332 form an interaction with dimeric histone H2A and H2B region; that stretch reads EAEMFSRAIH…SELQQARLAQ (85 aa). The interval 340–385 is disordered; sequence VQENQQHGSKRPLSQPTTSIGFPALEKPLGDFNDLSQLVKKKPRRH. Over residues 342-359 the composition is skewed to polar residues; that stretch reads ENQQHGSKRPLSQPTTSI.

It belongs to the NASP family. Homodimer. The homodimer interacts with a histone tetramer containing H3 and H4; the interaction is direct. The homodimer interacts with heterodimeric histone H2A and H2B; the interaction is direct. Component of the nuclear histone acetyltransferase B (HAT-B) complex composed of at least HAT1, HAT2 and HIF1. Does not interact with HAT1 in the absence of HAT2. Interacts with histones H3 and H4 in a HAT1/HAT2 dependent manner. Interaction with heterotetrameric histone H3 and H4 precludes interaction with dimeric histone H2A and H2B, irrespective of the fact that their binding involves non-identical regions of the protein.

Its subcellular location is the nucleus. Functionally, histone H3 and H4 specific chaperone component of the nuclear histone acetyltransferase B (HAT-B) complex. Involved in chromatin assembly and telomere silencing. This Saccharomyces cerevisiae (strain ATCC 204508 / S288c) (Baker's yeast) protein is HAT1-interacting factor 1 (HIF1).